The primary structure comprises 255 residues: Type III pantothenate kinase (255 aa).

ATP is bound at residue 6–13; the sequence is DVGNTNTV. Substrate is bound by residues Tyr100 and 107-110; that span reads GADR. The active-site Proton acceptor is the Asp109. Asp129 contributes to the K(+) binding site. Thr132 contributes to the ATP binding site. Thr184 provides a ligand contact to substrate.

Belongs to the type III pantothenate kinase family. Homodimer. The cofactor is NH4(+). K(+) serves as cofactor.

It localises to the cytoplasm. The enzyme catalyses (R)-pantothenate + ATP = (R)-4'-phosphopantothenate + ADP + H(+). Its pathway is cofactor biosynthesis; coenzyme A biosynthesis; CoA from (R)-pantothenate: step 1/5. Functionally, catalyzes the phosphorylation of pantothenate (Pan), the first step in CoA biosynthesis. In Syntrophomonas wolfei subsp. wolfei (strain DSM 2245B / Goettingen), this protein is Type III pantothenate kinase.